The following is a 291-amino-acid chain: ATP synthase gamma chain (291 aa).

Belongs to the ATPase gamma chain family. F-type ATPases have 2 components, CF(1) - the catalytic core - and CF(0) - the membrane proton channel. CF(1) has five subunits: alpha(3), beta(3), gamma(1), delta(1), epsilon(1). CF(0) has three main subunits: a, b and c.

It localises to the cell inner membrane. In terms of biological role, produces ATP from ADP in the presence of a proton gradient across the membrane. The gamma chain is believed to be important in regulating ATPase activity and the flow of protons through the CF(0) complex. The protein is ATP synthase gamma chain of Burkholderia pseudomallei (strain 1106a).